Consider the following 429-residue polypeptide: UDP-N-acetylglucosamine 1-carboxyvinyltransferase (429 aa).

Residue 22–23 (KN) participates in phosphoenolpyruvate binding. Arginine 102 is a binding site for UDP-N-acetyl-alpha-D-glucosamine. Residue cysteine 126 is the Proton donor of the active site. 2-(S-cysteinyl)pyruvic acid O-phosphothioketal is present on cysteine 126. Residues 131-135 (RPVDL), aspartate 316, and isoleucine 338 contribute to the UDP-N-acetyl-alpha-D-glucosamine site.

This sequence belongs to the EPSP synthase family. MurA subfamily.

It localises to the cytoplasm. The enzyme catalyses phosphoenolpyruvate + UDP-N-acetyl-alpha-D-glucosamine = UDP-N-acetyl-3-O-(1-carboxyvinyl)-alpha-D-glucosamine + phosphate. It functions in the pathway cell wall biogenesis; peptidoglycan biosynthesis. In terms of biological role, cell wall formation. Adds enolpyruvyl to UDP-N-acetylglucosamine. This is UDP-N-acetylglucosamine 1-carboxyvinyltransferase from Rhodopseudomonas palustris (strain BisB18).